A 222-amino-acid chain; its full sequence is MNKLEERSQHRKSRFRFLVISTFWRVLLLLKNDAEPLFHLGNIHYAYGHKASAMNYWKEAVSKNREHEKAWHNLVQCAVIQEEWEQAAEGLTILCRNHPTRFEYMSLYTHALKKLGKKEELEEWYLSHINGPHHEWAIEGLGMLYIRTRREIDAFKLLSPFVRKFPNRPVGLKILGISSIRTNQYEAGLTFLEKSLELKEDKEVKSLVDRVKRLKKVRGGNR.

TPR repeat units lie at residues 34-67 and 169-202; these read AEPL…NREH and PVGL…KEDK.

This Halalkalibacterium halodurans (strain ATCC BAA-125 / DSM 18197 / FERM 7344 / JCM 9153 / C-125) (Bacillus halodurans) protein is TPR repeat-containing protein BH2049.